A 219-amino-acid chain; its full sequence is Proteasome subunit beta type-9 (219 aa).

Residues 1–20 (MLRTGAPNGDLPRAGEVHTG) constitute a propeptide, removed in mature form. Catalysis depends on Thr21, which acts as the Nucleophile. Lys53 and Lys109 each carry N6-acetyllysine.

This sequence belongs to the peptidase T1B family. As to quaternary structure, the 26S proteasome consists of a 20S proteasome core and two 19S regulatory subunits. The 20S proteasome core is composed of 28 subunits that are arranged in four stacked rings, resulting in a barrel-shaped structure. The two end rings are each formed by seven alpha subunits, and the two central rings are each formed by seven beta subunits. The catalytic chamber with the active sites is on the inside of the barrel. Component of the immunoproteasome, where it displaces the equivalent housekeeping subunit PSMB6. Component of the spermatoproteasome, a form of the proteasome specifically found in testis. Autocleaved. The resulting N-terminal Thr residue of the mature subunit is responsible for the nucleophile proteolytic activity.

The protein resides in the cytoplasm. It is found in the nucleus. It carries out the reaction Cleavage of peptide bonds with very broad specificity.. The proteasome is a multicatalytic proteinase complex which is characterized by its ability to cleave peptides with Arg, Phe, Tyr, Leu, and Glu adjacent to the leaving group at neutral or slightly basic pH. The proteasome has an ATP-dependent proteolytic activity. This subunit is involved in antigen processing to generate class I binding peptides. The sequence is that of Proteasome subunit beta type-9 (PSMB9) from Bos taurus (Bovine).